The following is a 365-amino-acid chain: Protein-glutamate methylesterase/protein-glutamine glutaminase 2 (365 aa).

The region spanning Arg18–Asp135 is the Response regulatory domain. Asp69 carries the 4-aspartylphosphate modification. The CheB-type methylesterase domain occupies Gly162–Asp355. Active-site residues include Ser174, His200, and Asp297.

Belongs to the CheB family. Phosphorylated by CheA. Phosphorylation of the N-terminal regulatory domain activates the methylesterase activity.

It is found in the cytoplasm. The catalysed reaction is [protein]-L-glutamate 5-O-methyl ester + H2O = L-glutamyl-[protein] + methanol + H(+). It carries out the reaction L-glutaminyl-[protein] + H2O = L-glutamyl-[protein] + NH4(+). Involved in chemotaxis. Part of a chemotaxis signal transduction system that modulates chemotaxis in response to various stimuli. Catalyzes the demethylation of specific methylglutamate residues introduced into the chemoreceptors (methyl-accepting chemotaxis proteins or MCP) by CheR. Also mediates the irreversible deamidation of specific glutamine residues to glutamic acid. The chain is Protein-glutamate methylesterase/protein-glutamine glutaminase 2 from Cereibacter sphaeroides (strain ATCC 17023 / DSM 158 / JCM 6121 / CCUG 31486 / LMG 2827 / NBRC 12203 / NCIMB 8253 / ATH 2.4.1.) (Rhodobacter sphaeroides).